Consider the following 331-residue polypeptide: Type 2 lactosamine alpha-2,3-sialyltransferase (331 aa).

The Cytoplasmic segment spans residues 1–4 (MRGY). A helical; Signal-anchor for type II membrane protein membrane pass occupies residues 5–25 (LVAIFLSAVFLYYVLHCILWG). Residues 26–331 (TNVYWAAPVE…KNLVINLTQD (306 aa)) lie on the Lumenal side of the membrane. N-linked (GlcNAc...) asparagine glycans are attached at residues Asn129, Asn181, Asn282, Asn295, Asn308, and Asn327.

It belongs to the glycosyltransferase 29 family.

It localises to the golgi apparatus membrane. It catalyses the reaction a neolactoside nLc4Cer(d18:1(4E)) + CMP-N-acetyl-beta-neuraminate = a neolactoside IV(3)-alpha-NeuAc-nLc4Cer(d18:1(4E)) + CMP + H(+). The enzyme catalyses a beta-D-galactosyl-(1-&gt;4)-N-acetyl-beta-D-glucosaminyl derivative + CMP-N-acetyl-beta-neuraminate = an N-acetyl-alpha-neuraminyl-(2-&gt;3)-beta-D-galactosyl-(1-&gt;4)-N-acetyl-beta-D-glucosaminyl derivative + CMP + H(+). The catalysed reaction is a neolactoside nLc6Cer(d18:1(4E)) + CMP-N-acetyl-beta-neuraminate = a neolactoside VI(3)-alpha-NeuNAc-nLc6Cer(d18:1(4E)) + CMP + H(+). Transfers the sialyl residue from CMP-N-acetyl-beta-neuraminate to the terminal galactose residue on sugar chains of glycoproteins and glycolipids. It's alpha-2,3-sialyltransferase activity is specific toward type II glycan chains (Galbeta1-4GlcNAc) on glycoproteins and glycolipids such as neolactosides nLc4Cer and nLc6Cer, whose sialyl-products serve as precursors for the Lewis X antigen. Critically involved in the synthesis of functional selectin ligands needed for neutrophil recruitment during inflammation and lymphocyte homing to the lymph nodes. In Pongo abelii (Sumatran orangutan), this protein is Type 2 lactosamine alpha-2,3-sialyltransferase (ST3GAL6).